Consider the following 200-residue polypeptide: Pyridoxal 5'-phosphate synthase subunit PdxT (200 aa).

Glycine 46–serine 48 lines the L-glutamine pocket. Cysteine 78 functions as the Nucleophile in the catalytic mechanism. Residues arginine 107 and isoleucine 138–arginine 139 each bind L-glutamine. Residues histidine 175 and glutamate 177 each act as charge relay system in the active site.

It belongs to the glutaminase PdxT/SNO family. In the presence of PdxS, forms a dodecamer of heterodimers. Only shows activity in the heterodimer.

It catalyses the reaction aldehydo-D-ribose 5-phosphate + D-glyceraldehyde 3-phosphate + L-glutamine = pyridoxal 5'-phosphate + L-glutamate + phosphate + 3 H2O + H(+). The catalysed reaction is L-glutamine + H2O = L-glutamate + NH4(+). It functions in the pathway cofactor biosynthesis; pyridoxal 5'-phosphate biosynthesis. Catalyzes the hydrolysis of glutamine to glutamate and ammonia as part of the biosynthesis of pyridoxal 5'-phosphate. The resulting ammonia molecule is channeled to the active site of PdxS. In Corynebacterium glutamicum (strain R), this protein is Pyridoxal 5'-phosphate synthase subunit PdxT.